Consider the following 55-residue polypeptide: ATP synthase small subunit 6-A, mitochondrial (55 aa).

A mitochondrion-targeting transit peptide spans methionine 1–phenylalanine 11. The chain crosses the membrane as a helical span at residues phenylalanine 21–leucine 39.

Belongs to the ATPase 6 subunit family.

The protein localises to the mitochondrion inner membrane. In terms of biological role, mitochondrial membrane ATP synthase (F(1)F(0) ATP synthase or Complex V) produces ATP from ADP in the presence of a proton gradient across the membrane which is generated by electron transport complexes of the respiratory chain. F-type ATPases consist of two structural domains, F(1) - containing the extramembraneous catalytic core and F(0) - containing the membrane proton channel, linked together by a central stalk and a peripheral stalk. During catalysis, ATP synthesis in the catalytic domain of F(1) is coupled via a rotary mechanism of the central stalk subunits to proton translocation. Part of the complex F(0) domain. Confers tolerance to several abiotic stresses (e.g. salt, mannitol, drought, oxidative and cold stresses), probably by providing additional energy needed for cell homeostasis. This Arabidopsis thaliana (Mouse-ear cress) protein is ATP synthase small subunit 6-A, mitochondrial.